A 922-amino-acid polypeptide reads, in one-letter code: Band 3 anion transport protein (922 aa).

Disordered stretches follow at residues 1 to 36 and 355 to 389; these read MEGP…TMSN and QHPD…LRTR. Topologically, residues 1-416 are cytoplasmic; it reads MEGPGQDTED…LSDIRDALNP (416 aa). Residues 10-26 show a composition bias toward basic and acidic residues; sequence DALRRSLDPEGYEDTKG. Positions 27 to 36 are enriched in polar residues; it reads SRTSLGTMSN. The chain crosses the membrane as a helical span at residues 417–440; that stretch reads QCLAAVIFIYFAALSPAITFGGLL. Over 441–448 the chain is Extracellular; it reads GEKTRGMM. Residues 449–469 traverse the membrane as a helical segment; the sequence is GVSELLLSTSVQCLLFSLLSA. The Cytoplasmic segment spans residues 470–472; sequence QPL. A discontinuously helical membrane pass occupies residues 473–489; that stretch reads LVVGFSGPLLVFEEAFF. The Extracellular portion of the chain corresponds to 490 to 498; sequence RFCEDHGLE. The chain crosses the membrane as a helical span at residues 499-519; the sequence is YIVGRVWIGFWLILLVLLVVA. The Cytoplasmic segment spans residues 520–531; it reads CEGTVLVRYLSR. Residues 532–554 traverse the membrane as a helical segment; it reads YTQEIFSFLISLIFIYETFAKLV. Topologically, residues 555 to 581 are extracellular; it reads TIFEAHPLQQSYDTDVSTEPSVPKPNT. Residues 582 to 602 traverse the membrane as a helical segment; that stretch reads ALLSLVLMAGTFFLALFLRQF. Topologically, residues 603 to 613 are cytoplasmic; that stretch reads KNSVFLPGKVR. The chain crosses the membrane as a helical span at residues 614 to 634; the sequence is RLIGDFGVPISIFVMALADFF. At 635-674 the chain is on the extracellular side; it reads IKDTYTQKLKVPRGLEVTNGTARGWFIHPMGSATPFPIWM. N-linked (GlcNAc...) asparagine glycosylation is present at asparagine 653. The chain crosses the membrane as a helical span at residues 675–695; that stretch reads MFASPVPALLVFILIFLETQI. The Cytoplasmic portion of the chain corresponds to 696-711; that stretch reads TTLIVSKPERKLVKGS. A helical transmembrane segment spans residues 712 to 730; the sequence is GFHLDLLLIVAMGGLAALF. Residues 731 to 748 traverse the membrane as a discontinuously helical segment; that stretch reads GMPWLSATTVRTITHANA. At 749-771 the chain is on the cytoplasmic side; the sequence is LTVVGKSAVPGERAHIVEVKEQR. Transmembrane regions (helical) follow at residues 772-792 and 793-811; these read LSGL…PILK and YIPL…VTSL. Residues 812–849 lie on the Cytoplasmic side of the membrane; that stretch reads FGIQLFDRILLLLMPPKYHPKEPYVTRVKTWRITSSPL. The segment at residues 850-880 is an intramembrane region (discontinuously helical); the sequence is TQILVVALLWGVKVSPASLRCPFVLVLTVPL. Over 881–922 the chain is Cytoplasmic; that stretch reads RRLLLPRIFSEIELKCLDTDDAVVTFEEAEGQDVYNEVQMPS.

The protein belongs to the anion exchanger (TC 2.A.31) family. In terms of assembly, a dimer in solution, it spans the membrane asymmetrically and appears to be tetrameric. In terms of tissue distribution, erythrocytes.

Its subcellular location is the cell membrane. The protein localises to the basolateral cell membrane. The catalysed reaction is hydrogencarbonate(in) + chloride(out) = hydrogencarbonate(out) + chloride(in). Functions both as a transporter that mediates electroneutral anion exchange across the cell membrane and as a structural protein. Major integral membrane glycoprotein of the erythrocyte membrane; required for normal flexibility and stability of the erythrocyte membrane and for normal erythrocyte shape via the interactions of its cytoplasmic domain with cytoskeletal proteins, glycolytic enzymes, and hemoglobin. Functions as a transporter that mediates the 1:1 exchange of inorganic anions across the erythrocyte membrane. Mediates chloride-bicarbonate exchange in the kidney, and is required for normal acidification of the urine. The sequence is that of Band 3 anion transport protein (SLC4A1) from Gallus gallus (Chicken).